Reading from the N-terminus, the 98-residue chain is NADH-ubiquinone oxidoreductase chain 4L (98 aa).

Helical transmembrane passes span 1–21 (MSLIHINVFLAFTTSLMGLLM), 29–49 (SLLCLEGMMLSLFIMATMMVL), and 61–81 (IILLVFAACEAALGLSLLVMI).

Belongs to the complex I subunit 4L family. As to quaternary structure, core subunit of respiratory chain NADH dehydrogenase (Complex I) which is composed of 45 different subunits.

It localises to the mitochondrion inner membrane. The enzyme catalyses a ubiquinone + NADH + 5 H(+)(in) = a ubiquinol + NAD(+) + 4 H(+)(out). Functionally, core subunit of the mitochondrial membrane respiratory chain NADH dehydrogenase (Complex I) which catalyzes electron transfer from NADH through the respiratory chain, using ubiquinone as an electron acceptor. Part of the enzyme membrane arm which is embedded in the lipid bilayer and involved in proton translocation. The sequence is that of NADH-ubiquinone oxidoreductase chain 4L (MT-ND4L) from Ceratotherium simum (White rhinoceros).